A 393-amino-acid polypeptide reads, in one-letter code: L-methionine gamma-lyase (393 aa).

Pyridoxal 5'-phosphate-binding positions include 63–65 (YQR) and 93–94 (GM). Tyr119 lines the L-homocysteine pocket. 206-208 (SAT) is a pyridoxal 5'-phosphate binding site. The residue at position 209 (Lys209) is an N6-(pyridoxal phosphate)lysine. Arg367 is an L-homocysteine binding site. Residue Arg367 coordinates L-methionine.

It belongs to the trans-sulfuration enzymes family. L-methionine gamma-lyase subfamily. In terms of assembly, homotetramer. Pyridoxal 5'-phosphate is required as a cofactor.

The catalysed reaction is L-methionine + H2O = methanethiol + 2-oxobutanoate + NH4(+). It catalyses the reaction L-homocysteine + H2O = 2-oxobutanoate + hydrogen sulfide + NH4(+) + H(+). Its function is as follows. Catalyzes the alpha,gamma-elimination of L-methionine to produce methanethiol, 2-oxobutanoate and ammonia. Is also able to catalyze the alpha,gamma-elimination of L-homocysteine. The sequence is that of L-methionine gamma-lyase from Brevibacterium sandarakinum.